The sequence spans 195 residues: Inner membrane protein YohC (195 aa).

Residues 1-32 (MSHVWGLFSHPDREMQVINRENETISHHYTHH) are Cytoplasmic-facing. A helical transmembrane segment spans residues 33 to 55 (VLLMAAIPVICAFIGTTQIGWNF). Residues 56–64 (GDGTILKLS) lie on the Periplasmic side of the membrane. A helical transmembrane segment spans residues 65–87 (WFTGLALAVLFYGVMLAGVAVMG). The Cytoplasmic segment spans residues 88 to 107 (RVIWWMARNYPQRPSLAHCM). A helical membrane pass occupies residues 108-130 (VFAGYVATPLFLSGLVALYPLVW). The Periplasmic portion of the chain corresponds to 131–134 (LCAL). The chain crosses the membrane as a helical span at residues 135-157 (VGTVALFYTGYLLYLGIPSFLNI). Topologically, residues 158-169 (NKEEGLSFSSST) are cytoplasmic. Residues 170–192 (LAIGVLVLEVLLALTVILWGYGY) traverse the membrane as a helical segment. Residues 193–195 (RLF) are Periplasmic-facing.

The protein resides in the cell inner membrane. This is Inner membrane protein YohC (yohC) from Escherichia coli O6:H1 (strain CFT073 / ATCC 700928 / UPEC).